Consider the following 455-residue polypeptide: Kynureninase (455 aa).

Residues leucine 94, threonine 95, 122–125 (FPSD), aspartate 208, histidine 211, and tyrosine 233 each bind pyridoxal 5'-phosphate. The residue at position 234 (lysine 234) is an N6-(pyridoxal phosphate)lysine. Tryptophan 275 and asparagine 303 together coordinate pyridoxal 5'-phosphate.

It belongs to the kynureninase family. In terms of assembly, homodimer. Requires pyridoxal 5'-phosphate as cofactor.

It localises to the cytoplasm. The enzyme catalyses L-kynurenine + H2O = anthranilate + L-alanine + H(+). It catalyses the reaction 3-hydroxy-L-kynurenine + H2O = 3-hydroxyanthranilate + L-alanine + H(+). The protein operates within amino-acid degradation; L-kynurenine degradation; L-alanine and anthranilate from L-kynurenine: step 1/1. It functions in the pathway cofactor biosynthesis; NAD(+) biosynthesis; quinolinate from L-kynurenine: step 2/3. Functionally, catalyzes the cleavage of L-kynurenine (L-Kyn) and L-3-hydroxykynurenine (L-3OHKyn) into anthranilic acid (AA) and 3-hydroxyanthranilic acid (3-OHAA), respectively. This Vanderwaltozyma polyspora (strain ATCC 22028 / DSM 70294 / BCRC 21397 / CBS 2163 / NBRC 10782 / NRRL Y-8283 / UCD 57-17) (Kluyveromyces polysporus) protein is Kynureninase.